We begin with the raw amino-acid sequence, 321 residues long: MNVEAVQQYQHRTVLLEEAVDALALDGERANGMYVDGTFGRGGHSRLILQRLGENGCLLAFDKDTQAIANAATIEDKRFAIVHDSFATLSTALAERGIAQVNGVLLDLGISSPQVDDAARGFSFRADGPLDMRMDTTRGISAAEWLATETEQKIEKVIREYGEERFAFQIAKAIVAGRAVQPISSTRQLAEIVARAVKTREKGKDPATRTFQAIRIFINQELEELEVVLNEAYRHLAPHGRLVVISFHSLEDRIVKQFMASKANVPQPDRRLPIRAVDLPQPEMKLIARIKPSAAEISANPRARSAVMRVAERLPTPGAAS.

S-adenosyl-L-methionine is bound by residues 42–44 (GGH), D62, F86, D107, and Q114.

This sequence belongs to the methyltransferase superfamily. RsmH family.

It is found in the cytoplasm. The catalysed reaction is cytidine(1402) in 16S rRNA + S-adenosyl-L-methionine = N(4)-methylcytidine(1402) in 16S rRNA + S-adenosyl-L-homocysteine + H(+). In terms of biological role, specifically methylates the N4 position of cytidine in position 1402 (C1402) of 16S rRNA. This is Ribosomal RNA small subunit methyltransferase H from Herminiimonas arsenicoxydans.